A 724-amino-acid polypeptide reads, in one-letter code: Protein-glutamine gamma-glutamyltransferase 5 (724 aa).

Ala2 carries the N-acetylalanine modification. Residues Cys283, His342, and Asp365 contribute to the active site. Residues Asn405, Asp407, Glu453, and Glu458 each contribute to the Ca(2+) site. Polar residues-rich tracts occupy residues Arg473–Ser486 and Ala495–Pro505. Residues Arg473–Pro505 are disordered.

It belongs to the transglutaminase superfamily. Transglutaminase family. It depends on Ca(2+) as a cofactor.

Its subcellular location is the cytoplasm. The catalysed reaction is L-glutaminyl-[protein] + L-lysyl-[protein] = [protein]-L-lysyl-N(6)-5-L-glutamyl-[protein] + NH4(+). Catalyzes the cross-linking of proteins and the conjugation of polyamines to proteins. Contributes to the formation of the cornified cell envelope of keratinocytes. The protein is Protein-glutamine gamma-glutamyltransferase 5 (Tgm5) of Mus musculus (Mouse).